We begin with the raw amino-acid sequence, 1061 residues long: MSSENSEYYSDKEEDSVVNNSSLGRSRKSSRLSKSSRLSKSSRPSSAGVVIDETQSEEEESQSSETAESEKSDESDNSQNSQESEDSEDDSVRPSARNTKRKPLGIPSDSEDEEDELEQRALSPSTRMSITGVRPQDLSDDDSEIEYSDEVQEGPTEAPTAEAVVPRYTTQFAGNIQNDLHSTIGAADSEVLDDSSGSDVLILSNKETPIEILSSTDDDATTNKENMSGPPFERPSKSLSPRSSAGASVVKTSKNLSQPTIQAVLKQKTSPAAPRRSRIKSEDQKVVSQVVYDEEMRKLAEKRVQVSDAEKLFEKVAHKLPDKGSQIMKRIDTLRRELAMDEQWISALRVQQSNVPAVRVVKPTLNPPRAPSIDTLDWDELSEAVNEIKPVYTGAQGMATFNNQKALTLESLKDLHVSLEDLPGPEVLAEDPVGLKVSLMNHQKHALAWMSWRERKLPRGGILADDMGLGKTLTMISSVLACKNGQEMSEGKDESSDSDSEDDKNKKRKSVTGWKSKGRKDTRRGGTLVVCPASLLRQWESEVESKVSRQKLTVCVHHGNNRETKGKYLRDYDIVVTTYQIVAREHKSLSAVFGVKWRRIILDEAHVVRNHKSQSSLAVCDLRGKYRWALTGTPIQNKELDVYALLKFLRCSPFDDLHTWKKWIDNKSAGGQNRLNLLMKSLMLRRTKAQLQSDGKLNSLPNKELRLIEISLDKEEMNVYQTVMTYSRTLFAQFLHQRAERETDFNYRSDANKPTYNQIKDPNGAYYKMHEKFARMAGSKKEVKSHDILVLLLRLRQICCHPGLIDAMLDGEESQTMGDHSSDSDTPEIDLLAQLNKLAITDTSTDGQQSVANAGDDGPPLLPDEARIAKASKNLLKRSNPVFNLHRPSSKINMVIQILKTSILKSSDDKAIVVSQWTSVLDILRDHLSKDGVATLSLNGTIPVKNRQDIVNEFNDRNNQKRVLLLSLTAGGVGLNLIGANHLLLLDLHWNPQLEAQAQDRIYRVGQKKNVIIYKFMCVDTVEQRIKGLQDKKLDLADGVLTGAKVSSKLTIDDLKGLFGM.

Disordered stretches follow at residues 1 to 163 and 212 to 253; these read MSSE…TAEA and ILSS…VKTS. Residues 32–46 are compositionally biased toward low complexity; that stretch reads LSKSSRLSKSSRPSS. Residues serine 108 and serine 110 each carry the phosphoserine modification. The span at 138-152 shows a compositional bias: acidic residues; sequence LSDDDSEIEYSDEVQ. Phosphoserine is present on residues serine 214 and serine 215. At threonine 216 the chain carries Phosphothreonine. The segment covering 237–253 has biased composition (polar residues); sequence KSLSPRSSAGASVVKTS. A Helicase ATP-binding domain is found at 452–652; the sequence is WRERKLPRGG…YALLKFLRCS (201 aa). 465–472 provides a ligand contact to ATP; the sequence is DDMGLGKT. The tract at residues 485-523 is disordered; that stretch reads GQEMSEGKDESSDSDSEDDKNKKRKSVTGWKSKGRKDTR. The segment covering 506-522 has biased composition (basic residues); the sequence is KKRKSVTGWKSKGRKDT. The DEAH box signature appears at 603 to 606; the sequence is DEAH. Residues 891–1056 enclose the Helicase C-terminal domain; the sequence is KINMVIQILK…SSKLTIDDLK (166 aa).

The protein belongs to the SNF2/RAD54 helicase family.

It is found in the nucleus. Functionally, dsDNA-dependent ATPase which acts as a transcription termination factor by coupling ATP hydrolysis with removal of RNA polymerase II from the DNA template. The polypeptide is Transcription termination factor 2 (lds) (Drosophila melanogaster (Fruit fly)).